The sequence spans 134 residues: NADPH-dependent 7-cyano-7-deazaguanine reductase (134 aa).

The active-site Thioimide intermediate is the cysteine 48. Aspartate 55 serves as the catalytic Proton donor. Substrate is bound by residues 70–72 (VEL) and 89–90 (QE).

It belongs to the GTP cyclohydrolase I family. QueF type 1 subfamily.

The protein resides in the cytoplasm. The enzyme catalyses 7-aminomethyl-7-carbaguanine + 2 NADP(+) = 7-cyano-7-deazaguanine + 2 NADPH + 3 H(+). It participates in tRNA modification; tRNA-queuosine biosynthesis. Its function is as follows. Catalyzes the NADPH-dependent reduction of 7-cyano-7-deazaguanine (preQ0) to 7-aminomethyl-7-deazaguanine (preQ1). The polypeptide is NADPH-dependent 7-cyano-7-deazaguanine reductase (Caldanaerobacter subterraneus subsp. tengcongensis (strain DSM 15242 / JCM 11007 / NBRC 100824 / MB4) (Thermoanaerobacter tengcongensis)).